A 376-amino-acid polypeptide reads, in one-letter code: Cinnamyl alcohol dehydrogenase 2 (376 aa).

Residue Cys-44 coordinates Zn(2+). NADP(+) is bound at residue Ser-46. Positions 66, 67, 97, 100, 103, 111, and 161 each coordinate Zn(2+). Residues Thr-165, 187 to 192 (GLGGLG), 210 to 215 (SRSSEK), Thr-250, Gly-274, and 297 to 299 (SQI) contribute to the NADP(+) site.

This sequence belongs to the zinc-containing alcohol dehydrogenase family. Homodimer. It depends on Zn(2+) as a cofactor. Expressed at the base of the stems.

The catalysed reaction is (E)-cinnamyl alcohol + NADP(+) = (E)-cinnamaldehyde + NADPH + H(+). The enzyme catalyses (E)-coniferol + NADP(+) = (E)-coniferaldehyde + NADPH + H(+). It catalyses the reaction (E)-sinapyl alcohol + NADP(+) = (E)-sinapaldehyde + NADPH + H(+). It carries out the reaction (E)-4-coumaroyl alcohol + NADP(+) = (E)-4-coumaraldehyde + NADPH + H(+). The catalysed reaction is (E)-caffeyl alcohol + NADP(+) = (E)-caffeyl aldehyde + NADPH + H(+). The protein operates within aromatic compound metabolism; phenylpropanoid biosynthesis. In terms of biological role, involved in lignin biosynthesis. Catalyzes the final step specific for the production of lignin monomers. Catalyzes the NADPH-dependent reduction of coniferaldehyde, 5-hydroxyconiferaldehyde, sinapaldehyde, 4-coumaraldehyde and caffeyl aldehyde to their respective alcohols. This Arabidopsis thaliana (Mouse-ear cress) protein is Cinnamyl alcohol dehydrogenase 2.